We begin with the raw amino-acid sequence, 339 residues long: MTLHVQSAVSLRPFNTFGVDVQARLFAQARNDDEVREALAYSAEHDVPLLVIGGGSNLLLSGDVQALVLRMASRGIRIVREDCLEAIVEAEAGEPWHPFVQSCLELGLAGLENLSLIPGTVGAAPMQNIGAYGVEIKDVFHGLTALDRETGELREFALQDCAFGYRDSVFKHQPGRWLILRVRFKLSREANLHLEYGPVRQRLDQLGIDKPTPFDVSRAICAIRSEKLPDPAVLGNAGSFFKNPLVAAELYATIKSQHPGVVGYPQADGQVKLAAGWLIEQAGWKGYRDGDAGVHKLQSLVLVNYGHASGLQLLNLARRIQADIVERFGVELEMEPNLY.

In terms of domain architecture, FAD-binding PCMH-type spans Val-19–Glu-189. The active site involves Arg-166. Ser-239 serves as the catalytic Proton donor. Glu-335 is an active-site residue.

Belongs to the MurB family. It depends on FAD as a cofactor.

The protein resides in the cytoplasm. It catalyses the reaction UDP-N-acetyl-alpha-D-muramate + NADP(+) = UDP-N-acetyl-3-O-(1-carboxyvinyl)-alpha-D-glucosamine + NADPH + H(+). It participates in cell wall biogenesis; peptidoglycan biosynthesis. Cell wall formation. This Pseudomonas syringae pv. tomato (strain ATCC BAA-871 / DC3000) protein is UDP-N-acetylenolpyruvoylglucosamine reductase.